The chain runs to 760 residues: Catalase-peroxidase (760 aa).

Positions 1–57 (MTDSQDNRTPESPQGVDRKAEGGCPVLHDGVTAQGSESENPAIDSPTPRTGGRPNSL) are disordered. The tryptophyl-tyrosyl-methioninium (Trp-Tyr) (with M-277) cross-link spans 129–251 (WHAAGTYRIH…LGAVQMGLIY (123 aa)). His130 (proton acceptor) is an active-site residue. Residues 251-277 (YVNPEGPNGNPDPLASARDIRETFARM) constitute a cross-link (tryptophyl-tyrosyl-methioninium (Tyr-Met) (with W-129)). His292 serves as a coordination point for heme b.

This sequence belongs to the peroxidase family. Peroxidase/catalase subfamily. In terms of assembly, homodimer or homotetramer. Heme b is required as a cofactor. In terms of processing, formation of the three residue Trp-Tyr-Met cross-link is important for the catalase, but not the peroxidase activity of the enzyme.

The catalysed reaction is H2O2 + AH2 = A + 2 H2O. It catalyses the reaction 2 H2O2 = O2 + 2 H2O. In terms of biological role, bifunctional enzyme with both catalase and broad-spectrum peroxidase activity. This Nocardioides sp. (strain ATCC BAA-499 / JS614) protein is Catalase-peroxidase.